The sequence spans 326 residues: Pyruvate dehydrogenase E1 component subunit alpha (326 aa).

Heterodimer of an alpha and a beta chain. Requires thiamine diphosphate as cofactor.

It carries out the reaction N(6)-[(R)-lipoyl]-L-lysyl-[protein] + pyruvate + H(+) = N(6)-[(R)-S(8)-acetyldihydrolipoyl]-L-lysyl-[protein] + CO2. Its function is as follows. The pyruvate dehydrogenase complex catalyzes the overall conversion of pyruvate to acetyl-CoA and CO(2). It contains multiple copies of three enzymatic components: pyruvate dehydrogenase (E1), dihydrolipoamide acetyltransferase (E2) and lipoamide dehydrogenase (E3). In Rickettsia prowazekii (strain Madrid E), this protein is Pyruvate dehydrogenase E1 component subunit alpha (pdhA).